The chain runs to 401 residues: Tyrosine--tRNA ligase (401 aa).

Positions 42 to 51 (PTAPDIHLGH) match the 'HIGH' region motif. The 'KMSKS' region signature appears at 226–230 (KMSKS). ATP is bound at residue Lys229. Residues 334–394 (MGLATLLKEA…GKRKFARVRL (61 aa)) form the S4 RNA-binding domain.

It belongs to the class-I aminoacyl-tRNA synthetase family. TyrS type 2 subfamily. In terms of assembly, homodimer.

It is found in the cytoplasm. The enzyme catalyses tRNA(Tyr) + L-tyrosine + ATP = L-tyrosyl-tRNA(Tyr) + AMP + diphosphate + H(+). Its function is as follows. Catalyzes the attachment of tyrosine to tRNA(Tyr) in a two-step reaction: tyrosine is first activated by ATP to form Tyr-AMP and then transferred to the acceptor end of tRNA(Tyr). The sequence is that of Tyrosine--tRNA ligase from Haemophilus influenzae (strain ATCC 51907 / DSM 11121 / KW20 / Rd).